The chain runs to 1060 residues: Isoleucine--tRNA ligase (1060 aa).

The short motif at proline 55–histidine 65 is the 'HIGH' region element. The 'KMSKS' region motif lies at lysine 608 to histidine 612. Lysine 611 serves as a coordination point for ATP.

The protein belongs to the class-I aminoacyl-tRNA synthetase family. IleS type 2 subfamily. In terms of assembly, monomer. Zn(2+) is required as a cofactor.

The protein localises to the cytoplasm. It catalyses the reaction tRNA(Ile) + L-isoleucine + ATP = L-isoleucyl-tRNA(Ile) + AMP + diphosphate. Its function is as follows. Catalyzes the attachment of isoleucine to tRNA(Ile). As IleRS can inadvertently accommodate and process structurally similar amino acids such as valine, to avoid such errors it has two additional distinct tRNA(Ile)-dependent editing activities. One activity is designated as 'pretransfer' editing and involves the hydrolysis of activated Val-AMP. The other activity is designated 'posttransfer' editing and involves deacylation of mischarged Val-tRNA(Ile). This chain is Isoleucine--tRNA ligase, found in Thermobifida fusca (strain YX).